We begin with the raw amino-acid sequence, 610 residues long: T-cell immunomodulatory protein (610 aa).

Positions 1–32 (MAAGLLPSARAVLALLFLGLALLSVGPAPAQA) are cleaved as a signal peptide. Asn-35, Asn-94, Asn-123, Asn-138, Asn-145, Asn-150, Asn-175, and Asn-241 each carry an N-linked (GlcNAc...) asparagine glycan. One copy of the FG-GAP 1; atypical repeat lies at 98 to 135 (LVTSVVPGDYDGDSQMDVLLTYFPQNHSNNELGAVIFW). Residues 153–183 (FHDQPLIMDFNGDLIPDVFAITNESSQPQIL) form an FG-GAP 2; atypical repeat. An FG-GAP 3; atypical repeat occupies 256–291 (VVGQSAFADFDGDGHMDHLLPGCEDKDCQKSAIYLM). Asn-351, Asn-369, and Asn-480 each carry an N-linked (GlcNAc...) asparagine glycan. The helical transmembrane segment at 564-584 (IVLLTAVALTGVCVFILAIIA) threads the bilayer.

The protein belongs to the TIP family. Interacts with RUVBL1, RUVBL2 and alpha-tubulin.

It localises to the secreted. Its subcellular location is the cell membrane. Functionally, modulator of T-cell function. Has a protective effect in graft versus host disease model. This chain is T-cell immunomodulatory protein, found in Rattus norvegicus (Rat).